A 184-amino-acid chain; its full sequence is Ribosome-recycling factor (184 aa).

The protein belongs to the RRF family.

The protein resides in the cytoplasm. In terms of biological role, responsible for the release of ribosomes from messenger RNA at the termination of protein biosynthesis. May increase the efficiency of translation by recycling ribosomes from one round of translation to another. In Desulfotalea psychrophila (strain LSv54 / DSM 12343), this protein is Ribosome-recycling factor.